The chain runs to 323 residues: Melanocortin receptor 3 (323 aa).

At 1–37 the chain is on the extracellular side; it reads MNSSCCPSSSYPTLPNLSQHPAAPSASNRSGSGFCEQ. N-linked (GlcNAc...) asparagine glycans are attached at residues Asn-2, Asn-16, and Asn-28. The helical transmembrane segment at 38 to 63 threads the bilayer; the sequence is VFIKPEVFLALGIVSLMENILVILAV. At 64 to 75 the chain is on the cytoplasmic side; sequence VRNGNLHSPMYF. Residues 76–100 form a helical membrane-spanning segment; it reads FLCSLAAADMLVSLSNSLETIMIVV. Residues 101–118 are Extracellular-facing; that stretch reads INSDSLTLEDQFIQHMDN. The helical transmembrane segment at 119–140 threads the bilayer; the sequence is IFDSMICISLVASICNLLAIAV. Residues 141-160 lie on the Cytoplasmic side of the membrane; sequence DRYVTIFYALRYHSIMTVRK. Residues 161-181 traverse the membrane as a helical segment; sequence ALSLIVAIWVCCGICGVMFIV. At 182-186 the chain is on the extracellular side; the sequence is YSESK. A helical transmembrane segment spans residues 187-210; the sequence is MVIVCLITMFFAMVLLMGTLYIHM. Residues 211 to 245 are Cytoplasmic-facing; the sequence is FLFARLHVQRIAALPPADGVAPQQHSCMKGAVTIT. A helical membrane pass occupies residues 246 to 268; sequence ILLGVFIFCWAPFFLHLVLIITC. Residues 269 to 277 lie on the Extracellular side of the membrane; the sequence is PTNPYCICY. The helical transmembrane segment at 278-301 threads the bilayer; that stretch reads TAHFNTYLVLIMCNSVIDPLIYAF. The Cytoplasmic portion of the chain corresponds to 302–323; it reads RSLELRNTFKEILCGCNGMNVG. Residue Cys-315 is the site of S-palmitoyl cysteine attachment.

It belongs to the G-protein coupled receptor 1 family. In terms of tissue distribution, brain.

Its subcellular location is the cell membrane. Its function is as follows. Receptor for MSH (alpha, beta and gamma) and ACTH. This receptor is mediated by G proteins which activate adenylate cyclase. Required for expression of anticipatory patterns of activity and wakefulness during periods of limited nutrient availability and for the normal regulation of circadian clock activity in the brain. The sequence is that of Melanocortin receptor 3 (Mc3r) from Rattus norvegicus (Rat).